The following is an 84-amino-acid chain: MPKKAASPEIKAASFETSLSELEQIVTRLESGELPLEDALNEFERGVQLARQGQQTLLQAEQRVQILLSDDVDAPLKPFTPDTE.

It belongs to the XseB family. Heterooligomer composed of large and small subunits.

The protein localises to the cytoplasm. It carries out the reaction Exonucleolytic cleavage in either 5'- to 3'- or 3'- to 5'-direction to yield nucleoside 5'-phosphates.. Functionally, bidirectionally degrades single-stranded DNA into large acid-insoluble oligonucleotides, which are then degraded further into small acid-soluble oligonucleotides. The polypeptide is Exodeoxyribonuclease 7 small subunit (Yersinia pseudotuberculosis serotype O:1b (strain IP 31758)).